We begin with the raw amino-acid sequence, 374 residues long: S-adenosylmethionine:tRNA ribosyltransferase-isomerase (374 aa).

Belongs to the QueA family. Monomer.

Its subcellular location is the cytoplasm. It carries out the reaction 7-aminomethyl-7-carbaguanosine(34) in tRNA + S-adenosyl-L-methionine = epoxyqueuosine(34) in tRNA + adenine + L-methionine + 2 H(+). It participates in tRNA modification; tRNA-queuosine biosynthesis. Transfers and isomerizes the ribose moiety from AdoMet to the 7-aminomethyl group of 7-deazaguanine (preQ1-tRNA) to give epoxyqueuosine (oQ-tRNA). The sequence is that of S-adenosylmethionine:tRNA ribosyltransferase-isomerase from Sorangium cellulosum (strain So ce56) (Polyangium cellulosum (strain So ce56)).